The chain runs to 346 residues: MEKLARKQVQALTPYLSARRIGGSGDVWLNANESPFDNEYKFNFARLNRYSECQPPELINAYAAYAEVKPEQVLTSRGADEGIELLVRAFCEPNQDAILYCPPTYGMYSISAETIGVETKTVPLTSDWQLDLPAIEASLENVKVVFVCSPNNPTGNIVDRKDILSLLEMTKDRAIVVMDEAYIDFCMEKSTVDLLADYPHLAILRTLSKAFALAGLRCGFTLANEELINVLLKVIAPYPVPVPVAEIATQALSEAGLARMKYQMLDLSANRAYLQAGLMVLPGVTVYEGWGNYLLVKFTNGDAVFKAAWDHGIILRNSPIENCVRISVGNREECEKTLGFIRNQLI.

Lys209 carries the N6-(pyridoxal phosphate)lysine modification.

This sequence belongs to the class-II pyridoxal-phosphate-dependent aminotransferase family. Histidinol-phosphate aminotransferase subfamily. As to quaternary structure, homodimer. Pyridoxal 5'-phosphate is required as a cofactor.

The enzyme catalyses L-histidinol phosphate + 2-oxoglutarate = 3-(imidazol-4-yl)-2-oxopropyl phosphate + L-glutamate. It participates in amino-acid biosynthesis; L-histidine biosynthesis; L-histidine from 5-phospho-alpha-D-ribose 1-diphosphate: step 7/9. The protein is Histidinol-phosphate aminotransferase of Aliivibrio fischeri (strain MJ11) (Vibrio fischeri).